We begin with the raw amino-acid sequence, 426 residues long: MPVLLKMSVSITFLRPFARVLVPFTLHRKRRVLYSTIMQRYMSSKIPAASYPNKESTPPSEELELDRWKITMKSSVQEEDVSTATSSEDEDPLAATRELVEMWRLLGKEVPEHFSEEELKTLMECVSKSSKRKYLKYLYIKEKMKKARQIKKEMKKAEKEEPKKDQLPETIKEDKQQNFLFLRLWDRNMDIAMGWKGAQAMQFGQPLVFDMAYDDHMKPKELQNAVSQLLESEGCNRRNVDPFHIYFCNLKTGGAYYKELVKRYGEKWNKLLLTATEKSHVDLFPKDSIIYLTADSPNVMTTFKHDKIYIVGSFVDKNMQPGTSLAKAKRLKLATECLPLDKYLQWDTGTKNLTLDQMMRILLCLKNTGSWEEALKFVPSRKHAGYLEISQHSQEFLNRMKKSKTFNSFPRGSINRHRKSSLKENI.

A mitochondrion-targeting transit peptide spans 1 to 41; it reads MPVLLKMSVSITFLRPFARVLVPFTLHRKRRVLYSTIMQRY. Residue Ser-86 is modified to Phosphoserine. Residues 138 to 166 are a coiled coil; it reads LYIKEKMKKARQIKKEMKKAEKEEPKKDQ. Positions 193-385 constitute an SAM-dependent MTase TRM10-type domain; sequence MGWKGAQAMQ…KFVPSRKHAG (193 aa).

It belongs to the class IV-like SAM-binding methyltransferase superfamily. TRM10 family. In terms of assembly, component of mitochondrial ribonuclease P, a complex composed of TRMT10C/MRPP1, HSD17B10/MRPP2 and PRORP/MRPP3. Interacts with HSD17B10/MRPP2; forming the MRPP1-MRPP2 subcomplex of the mitochondrial ribonuclease P complex. Interacts with GRSF1.

It localises to the mitochondrion matrix. Its subcellular location is the mitochondrion nucleoid. It catalyses the reaction adenosine(9) in tRNA + S-adenosyl-L-methionine = N(1)-methyladenosine(9) in tRNA + S-adenosyl-L-homocysteine + H(+). It carries out the reaction guanosine(9) in tRNA + S-adenosyl-L-methionine = N(1)-methylguanosine(9) in tRNA + S-adenosyl-L-homocysteine + H(+). The catalysed reaction is an adenosine in mRNA + S-adenosyl-L-methionine = an N(1)-methyladenosine in mRNA + S-adenosyl-L-homocysteine + H(+). Its function is as follows. Mitochondrial tRNA N(1)-methyltransferase involved in mitochondrial tRNA maturation. Component of mitochondrial ribonuclease P, a complex composed of TRMT10C/MRPP1, HSD17B10/MRPP2 and PRORP/MRPP3, which cleaves tRNA molecules in their 5'-ends. Together with HSD17B10/MRPP2, forms a subcomplex of the mitochondrial ribonuclease P, named MRPP1-MRPP2 subcomplex, which displays functions that are independent of the ribonuclease P activity. The MRPP1-MRPP2 subcomplex catalyzes the formation of N(1)-methylguanine and N(1)-methyladenine at position 9 (m1G9 and m1A9, respectively) in tRNAs; TRMT10C/MRPP1 acting as the catalytic N(1)-methyltransferase subunit. The MRPP1-MRPP2 subcomplex also acts as a tRNA maturation platform: following 5'-end cleavage by the mitochondrial ribonuclease P complex, the MRPP1-MRPP2 subcomplex enhances the efficiency of 3'-processing catalyzed by ELAC2, retains the tRNA product after ELAC2 processing and presents the nascent tRNA to the mitochondrial CCA tRNA nucleotidyltransferase TRNT1 enzyme. In addition to tRNA N(1)-methyltransferase activity, TRMT10C/MRPP1 also acts as a mRNA N(1)-methyltransferase by mediating methylation of adenosine residues at the N(1) position of MT-ND5 mRNA. Associates with mitochondrial DNA complexes at the nucleoids to initiate RNA processing and ribosome assembly. This Bos taurus (Bovine) protein is tRNA methyltransferase 10 homolog C.